The chain runs to 108 residues: Thiosulfate sulfurtransferase GlpE (108 aa).

The 89-residue stretch at 17-105 (QEKEAVLVDI…WQRQFPAEVA (89 aa)) folds into the Rhodanese domain. Cysteine 65 serves as the catalytic Cysteine persulfide intermediate.

It belongs to the GlpE family.

The protein resides in the cytoplasm. The enzyme catalyses thiosulfate + hydrogen cyanide = thiocyanate + sulfite + 2 H(+). It catalyses the reaction thiosulfate + [thioredoxin]-dithiol = [thioredoxin]-disulfide + hydrogen sulfide + sulfite + 2 H(+). In terms of biological role, transferase that catalyzes the transfer of sulfur from thiosulfate to thiophilic acceptors such as cyanide or dithiols. May function in a CysM-independent thiosulfate assimilation pathway by catalyzing the conversion of thiosulfate to sulfite, which can then be used for L-cysteine biosynthesis. This chain is Thiosulfate sulfurtransferase GlpE, found in Escherichia coli O139:H28 (strain E24377A / ETEC).